The chain runs to 173 residues: Mesencephalic astrocyte-derived neurotrophic factor homolog (173 aa).

The N-terminal stretch at 1 to 22 (MNTSQIVLMFCLVVGVAQTALA) is a signal peptide. Disulfide bonds link Cys-28-Cys-114, Cys-31-Cys-103, Cys-61-Cys-72, and Cys-148-Cys-151.

The protein belongs to the ARMET family.

It is found in the secreted. Required during the maturation of the embryonic nervous system for maintenance of neuronal and cuticular connectivity. Essential for maintenance of dopaminergic neurons and dopamine levels. This is Mesencephalic astrocyte-derived neurotrophic factor homolog from Drosophila grimshawi (Hawaiian fruit fly).